Reading from the N-terminus, the 629-residue chain is MGVGGSFWDLLKPYARHEGAGYLRGRRVAVDLSFWVVSHSAAIRARSPHARLPHLRTLFFRTLSLFSKMGAFPVFVVDGQPSPLKSQVRAARFFRGSGMDLAALPSTEAEASADALVQPRNAKFTRYVEDCVELLEYLGMPVLRAKGEGEALCAQLNNQGHVDACITSDSDAFLFGAKTVIKVLRSNCKEPFECYNMADIESGLGLKRKQMVAMALLVGSDHDLHGVPGFGPETALRFVQLFDEDNVLAKLYEIGKGVYPFIGVSAPNIDDLPSPSTKSLPRARSPHCSHCGHPGNKKNHIKDGCNFCLVDSLENCVEKPAGFICECPSCDKARDLKVQRRNENWQIKVCKRIAAETNFPNEEIINLYLNDDNLDNENGVPLLTWNKPDMEILVDFLSFKQNWEPAYIRQRMLPMLSTIYLREMASSQSKSFLLYDQYKFHSIQRIKIRYGHPYYLVKWKRVTRSMISNDPPSKQTELEGKNDKVEVLDGDDEVVDEEEEEPTMISETTELLDEPDVPQVLDDDKDCFLLTDEDIELVNAAFPDEAQRFQEEQRLKEAKSIARKSKLNVAGFETPKGPRPSGVQLSIKEFYRSKKGLSGDSGKDGSRKSSDVDLSKNLPKSVRRRLLFD.

The N-domain stretch occupies residues 1-87; sequence MGVGGSFWDL…DGQPSPLKSQ (87 aa). The interval 2 to 98 is XPG-N domain; the sequence is GVGGSFWDLL…RAARFFRGSG (97 aa). Asp31, Asp78, Glu148, Glu150, Asp169, Asp171, and Asp221 together coordinate Mg(2+). Residues 136 to 221 form an XPG-I domain region; sequence EYLGMPVLRA…VAMALLVGSD (86 aa). The segment at 136–225 is I-domain; sequence EYLGMPVLRA…LLVGSDHDLH (90 aa). A 5'-3' exonuclease domain region spans residues 221-421; sequence DHDLHGVPGF…MLPMLSTIYL (201 aa). Residues 594-617 are disordered; the sequence is KKGLSGDSGKDGSRKSSDVDLSKN. The span at 601-614 shows a compositional bias: basic and acidic residues; it reads SGKDGSRKSSDVDL.

This sequence belongs to the XPG/RAD2 endonuclease family. GEN subfamily. Monomer. Interacts with PCNA. PCNA stimulates the nuclease activity without altering cleavage specificity. Requires Mg(2+) as cofactor. In terms of tissue distribution, highly expressed in anthers. Expressed in roots and leaves.

Its subcellular location is the nucleus. In terms of biological role, endonuclease which cleaves flap structures at the junction between single-stranded DNA and double-stranded DNA. Possesses both single-stranded and double-stranded DNA-binding activities. Involved in early microspore development, but does not alter meiosis or tapetal cells development. Possesses Holliday junction (HJ) resolvase activity in vitro. Cleaves HJ at symmetrically related sites of the branch point. This chain is Flap endonuclease GEN-like 1, found in Oryza sativa subsp. japonica (Rice).